Reading from the N-terminus, the 316-residue chain is tRNA dimethylallyltransferase (316 aa).

Gly-17 to Thr-24 is an ATP binding site. A substrate-binding site is contributed by Thr-19 to Thr-24. Interaction with substrate tRNA stretches follow at residues Asp-42–Leu-45, Gln-166–Arg-170, Arg-247–Arg-252, and Lys-280–Arg-287.

This sequence belongs to the IPP transferase family. In terms of assembly, monomer. It depends on Mg(2+) as a cofactor.

The catalysed reaction is adenosine(37) in tRNA + dimethylallyl diphosphate = N(6)-dimethylallyladenosine(37) in tRNA + diphosphate. Its function is as follows. Catalyzes the transfer of a dimethylallyl group onto the adenine at position 37 in tRNAs that read codons beginning with uridine, leading to the formation of N6-(dimethylallyl)adenosine (i(6)A). In Shigella flexneri serotype 5b (strain 8401), this protein is tRNA dimethylallyltransferase.